Consider the following 492-residue polypeptide: Protein odr-4 homolog (492 aa).

The disordered stretch occupies residues 251-270; that stretch reads LQPTSTTGGTATASSNTTDS. Over residues 254-268 the composition is skewed to low complexity; it reads TSTTGGTATASSNTT. The helical transmembrane segment at 469-489 threads the bilayer; sequence MVGIAVALLVLLSSVALHFVL.

This sequence belongs to the ODR-4 family.

Its subcellular location is the membrane. Functionally, may play a role in the trafficking of a subset of G-protein coupled receptors. This is Protein odr-4 homolog from Drosophila melanogaster (Fruit fly).